The primary structure comprises 375 residues: DNA replication and repair protein RecF (375 aa).

34–41 (GDNGAGKT) is a binding site for ATP.

This sequence belongs to the RecF family.

The protein resides in the cytoplasm. The RecF protein is involved in DNA metabolism; it is required for DNA replication and normal SOS inducibility. RecF binds preferentially to single-stranded, linear DNA. It also seems to bind ATP. This Rhizobium rhizogenes (strain K84 / ATCC BAA-868) (Agrobacterium radiobacter) protein is DNA replication and repair protein RecF.